The following is a 104-amino-acid chain: Probable guanidinium efflux system subunit GdnD (104 aa).

4 helical membrane passes run Trp3–Phe23, Trp31–Glu51, Ala58–Tyr78, and Gly84–Ser104.

The protein belongs to the drug/metabolite transporter (DMT) superfamily. Small multidrug resistance (SMR) (TC 2.A.7.1) family. YkkC/YkkD subfamily. The efflux pump is composed of GdnC and GdnD.

It is found in the cell membrane. In terms of biological role, probably involved in guanidinium transport. The protein is Probable guanidinium efflux system subunit GdnD of Bacillus licheniformis (strain ATCC 14580 / DSM 13 / JCM 2505 / CCUG 7422 / NBRC 12200 / NCIMB 9375 / NCTC 10341 / NRRL NRS-1264 / Gibson 46).